A 426-amino-acid chain; its full sequence is MNQLRLEPIKKVSGTINIPGSKSISNRALLLATLASGTTTLTNLLDSDDIRYMLASLKQLGVSYRLSNNNTVCELDGLAGPLNAGEPQTLFLGNAGTAMRPLCAALTLGQGQFTLTGEPRMEERPIGDLVDALRQLGAEVSYLKNEGFPPLNITSTGLNGGNVEIAGDLSSQFLTALLMVAPLAKGDVNIKIKGELVSKPYIDITLALMAQFGVEVQNNDYASFVIKAGQRYVSPGKVLVEGDASSASYFLAAGAIQGGEVKVTGVGKLSIQGDVKFADVLEQMGADIEWGDDYIIARQAKLKAVDLDMNHIPDAAMTIATAALFATGTTRIRNIYNWRIKETDRLAAMATELRKVGAIVDEGHDYISVTPPAKLNTAAIDTYNDHRMAMCFSMMAFADCGITINEPECTSKTFPDYFNQFNALAN.

Residues Lys-22, Ser-23, and Arg-27 each coordinate 3-phosphoshikimate. A phosphoenolpyruvate-binding site is contributed by Lys-22. The phosphoenolpyruvate site is built by Gly-96 and Arg-124. 3-phosphoshikimate contacts are provided by Ser-170, Ser-171, Gln-172, Ser-198, Asp-314, Asn-337, and Lys-341. Gln-172 is a phosphoenolpyruvate binding site. Catalysis depends on Asp-314, which acts as the Proton acceptor. Phosphoenolpyruvate contacts are provided by Arg-345, Arg-387, and Lys-412.

This sequence belongs to the EPSP synthase family. As to quaternary structure, monomer.

It localises to the cytoplasm. It carries out the reaction 3-phosphoshikimate + phosphoenolpyruvate = 5-O-(1-carboxyvinyl)-3-phosphoshikimate + phosphate. It functions in the pathway metabolic intermediate biosynthesis; chorismate biosynthesis; chorismate from D-erythrose 4-phosphate and phosphoenolpyruvate: step 6/7. Functionally, catalyzes the transfer of the enolpyruvyl moiety of phosphoenolpyruvate (PEP) to the 5-hydroxyl of shikimate-3-phosphate (S3P) to produce enolpyruvyl shikimate-3-phosphate and inorganic phosphate. The chain is 3-phosphoshikimate 1-carboxyvinyltransferase from Shewanella halifaxensis (strain HAW-EB4).